Here is a 471-residue protein sequence, read N- to C-terminus: WASH complex subunit 1 (471 aa).

Residues 1–54 (MTPTGTQHSLAGQTYAVPLIQPDLRREEAIQQVADALQYLQKVSGDIFSRISQR) form a required for WASH complex assembly region. The WHD1 stretch occupies residues 1-167 (MTPTGTQHSL…EGLGGLPSNI (167 aa)). The disordered stretch occupies residues 297–471 (EDGVLTARPP…GEEDEDDWES (175 aa)). A compositionally biased stretch (pro residues) spans 304–336 (RPPPPPPPPPPPAPAVLMSVPPPPPPPQAPPGQ). A VCA region spans residues 353 to 471 (QGAPKEVVDP…GEEDEDDWES (119 aa)). Positions 365–387 (GRATLLESIRQAGGIGKAKLRSV) constitute a WH2 domain. A compositionally biased stretch (basic and acidic residues) spans 386–402 (SVKERKLEKKKQKEQEQ). Residues 428 to 442 (SGKGPGSGASEGPGG) show a composition bias toward gly residues. Acidic residues predominate over residues 462-471 (GEEDEDDWES).

This sequence belongs to the WASH1 family. Component of the WASH core complex also described as WASH regulatory complex SHRC composed of WASHC1, WASHC2, WASHC3, WASHC4 and WASHC5. The WASH core complex associates with the F-actin-capping protein dimer (formed by CAPZA1, CAPZA2 or CAPZA3 and CAPZB); the assembly has been initially described as WASH complex. Interacts (via WHD1 region) with WASHC2; the interaction is direct. Interacts with alpha-tubulin. Interacts with BECN1; WASHC1 and AMBRA1 can competitively interact with BECN1. Interacts with BLOC1S2; may associate with the BLOC-1 complex. Interacts with tubulin gamma chain (TUBG1 or TUBG2). Interacts with TBC1D23.

The protein localises to the early endosome membrane. The protein resides in the recycling endosome membrane. Its subcellular location is the late endosome. It localises to the cytoplasmic vesicle. It is found in the autophagosome. The protein localises to the cytoplasm. The protein resides in the cytoskeleton. Its subcellular location is the microtubule organizing center. It localises to the centrosome. It is found in the centriole. In terms of biological role, acts as a component of the WASH core complex that functions as a nucleation-promoting factor (NPF) at the surface of endosomes, where it recruits and activates the Arp2/3 complex to induce actin polymerization, playing a key role in the fission of tubules that serve as transport intermediates during endosome sorting. Involved in endocytic trafficking of EGF. Involved in transferrin receptor recycling. Regulates the trafficking of endosomal alpha5beta1 integrin to the plasma membrane and involved in invasive cell migration. In T-cells involved in endosome-to-membrane recycling of receptors including T-cell receptor (TCR), CD28 and ITGAL; proposed to be implicated in T-cell proliferation and effector function. In dendritic cells involved in endosome-to-membrane recycling of major histocompatibility complex (MHC) class II probably involving retromer and subsequently allowing antigen sampling, loading and presentation during T-cell activation. Involved in negative regulation of autophagy independently from its role in endosomal sorting by inhibiting BECN1 ubiquitination to inactivate PIK3C3/Vps34 activity. The sequence is that of WASH complex subunit 1 from Bos taurus (Bovine).